A 500-amino-acid chain; its full sequence is Ent-cassadiene C11-alpha-hydroxylase 1 (500 aa).

The chain crosses the membrane as a helical span at residues 4 to 24 (SQVWLLWGALSVAVLFYLSTL). Cys-442 lines the heme pocket.

The protein belongs to the cytochrome P450 family. The cofactor is heme.

The protein localises to the membrane. It carries out the reaction ent-cassa-12,15-diene + reduced [NADPH--hemoprotein reductase] + O2 = ent-11beta-hydroxycassa-12,15-diene + oxidized [NADPH--hemoprotein reductase] + H2O + H(+). Its function is as follows. Enzyme of the diterpenoid metabolism involved in the biosynthesis of antibacterial oryzalides such as phytocassane. Can use ent-cassadiene as substrate, but not C11-alpha-hydroxy-ent-cassadiene, ent-pimaradiene, ent-sandaracopimaradiene, ent-kaurene, ent-isokaurene, syn-pimaradiene, syn-stemarene, syn-stemodene. The sequence is that of Ent-cassadiene C11-alpha-hydroxylase 1 from Oryza sativa subsp. japonica (Rice).